We begin with the raw amino-acid sequence, 274 residues long: tRNA-cytidine(32) 2-sulfurtransferase (274 aa).

The PP-loop motif motif lies at 40–45 (SGGKDS). Positions 115, 118, and 206 each coordinate [4Fe-4S] cluster.

This sequence belongs to the TtcA family. As to quaternary structure, homodimer. Mg(2+) is required as a cofactor. Requires [4Fe-4S] cluster as cofactor.

The protein resides in the cytoplasm. The catalysed reaction is cytidine(32) in tRNA + S-sulfanyl-L-cysteinyl-[cysteine desulfurase] + AH2 + ATP = 2-thiocytidine(32) in tRNA + L-cysteinyl-[cysteine desulfurase] + A + AMP + diphosphate + H(+). It participates in tRNA modification. Its function is as follows. Catalyzes the ATP-dependent 2-thiolation of cytidine in position 32 of tRNA, to form 2-thiocytidine (s(2)C32). The sulfur atoms are provided by the cysteine/cysteine desulfurase (IscS) system. The polypeptide is tRNA-cytidine(32) 2-sulfurtransferase (Pseudomonas entomophila (strain L48)).